A 259-amino-acid polypeptide reads, in one-letter code: DNA repair protein RecO (259 aa).

This sequence belongs to the RecO family.

Its function is as follows. Involved in DNA repair and RecF pathway recombination. This is DNA repair protein RecO from Chloroherpeton thalassium (strain ATCC 35110 / GB-78).